The sequence spans 153 residues: Endoribonuclease YbeY (153 aa).

Zn(2+)-binding residues include His114, His118, and His124.

The protein belongs to the endoribonuclease YbeY family. The cofactor is Zn(2+).

The protein resides in the cytoplasm. Single strand-specific metallo-endoribonuclease involved in late-stage 70S ribosome quality control and in maturation of the 3' terminus of the 16S rRNA. In Shewanella baltica (strain OS155 / ATCC BAA-1091), this protein is Endoribonuclease YbeY.